A 110-amino-acid chain; its full sequence is uncharacterized protein (110 aa).

The N-terminal stretch at Met-1–Ala-19 is a signal peptide. N-linked (GlcNAc...) asparagine glycosylation is present at Asn-101.

Component of the acid-soluble and acid-insoluble organic matrix of prismatic shell layers (at protein level).

It is found in the secreted. This is an uncharacterized protein from Haliotis asinina (Donkey's ear abalone).